The primary structure comprises 70 residues: Brevinin-1MT2 (70 aa).

Positions 1 to 22 are cleaved as a signal peptide; sequence MFTLKKSMLLLFFLGTINLSLC. The propeptide occupies 23 to 44; it reads EQERNADEEERRDDDEMDVEVE. A disulfide bridge connects residues C64 and C70.

This sequence belongs to the frog skin active peptide (FSAP) family. Brevinin subfamily. As to expression, expressed by the skin glands.

The protein resides in the secreted. Its function is as follows. Antimicrobial peptide with activity against a variety of Gram-negative and Gram-positive bacteria and against fungi. Shows strong hemolytic activity against human erythrocytes. The protein is Brevinin-1MT2 of Amolops mantzorum (Sichuan torrent frog).